The following is a 253-amino-acid chain: Imidazole glycerol phosphate synthase subunit HisF (253 aa).

Residues Asp-11 and Asp-130 contribute to the active site.

This sequence belongs to the HisA/HisF family. In terms of assembly, heterodimer of HisH and HisF.

The protein resides in the cytoplasm. It carries out the reaction 5-[(5-phospho-1-deoxy-D-ribulos-1-ylimino)methylamino]-1-(5-phospho-beta-D-ribosyl)imidazole-4-carboxamide + L-glutamine = D-erythro-1-(imidazol-4-yl)glycerol 3-phosphate + 5-amino-1-(5-phospho-beta-D-ribosyl)imidazole-4-carboxamide + L-glutamate + H(+). The protein operates within amino-acid biosynthesis; L-histidine biosynthesis; L-histidine from 5-phospho-alpha-D-ribose 1-diphosphate: step 5/9. Functionally, IGPS catalyzes the conversion of PRFAR and glutamine to IGP, AICAR and glutamate. The HisF subunit catalyzes the cyclization activity that produces IGP and AICAR from PRFAR using the ammonia provided by the HisH subunit. This Geobacter sulfurreducens (strain ATCC 51573 / DSM 12127 / PCA) protein is Imidazole glycerol phosphate synthase subunit HisF.